Reading from the N-terminus, the 439-residue chain is Ribosomal protein uS12 methylthiotransferase RimO (439 aa).

In terms of domain architecture, MTTase N-terminal spans 3–115 (KKLHLISLGC…IDQMVRERQG (113 aa)). Positions 12, 46, 78, 147, 151, and 154 each coordinate [4Fe-4S] cluster. The 230-residue stretch at 133–362 (TGSSVHAYVK…DKIIQKQHRA (230 aa)) folds into the Radical SAM core domain.

Belongs to the methylthiotransferase family. RimO subfamily. Requires [4Fe-4S] cluster as cofactor.

Its subcellular location is the cytoplasm. The enzyme catalyses L-aspartate(89)-[ribosomal protein uS12]-hydrogen + (sulfur carrier)-SH + AH2 + 2 S-adenosyl-L-methionine = 3-methylsulfanyl-L-aspartate(89)-[ribosomal protein uS12]-hydrogen + (sulfur carrier)-H + 5'-deoxyadenosine + L-methionine + A + S-adenosyl-L-homocysteine + 2 H(+). Its function is as follows. Catalyzes the methylthiolation of an aspartic acid residue of ribosomal protein uS12. The sequence is that of Ribosomal protein uS12 methylthiotransferase RimO from Wolinella succinogenes (strain ATCC 29543 / DSM 1740 / CCUG 13145 / JCM 31913 / LMG 7466 / NCTC 11488 / FDC 602W) (Vibrio succinogenes).